The following is a 110-amino-acid chain: Large ribosomal subunit protein uL22 (110 aa).

The segment covering 85–95 (RGTASKIRKPT) has biased composition (basic residues). Residues 85–110 (RGTASKIRKPTSHVMVEVSKAQKKEA) form a disordered region.

It belongs to the universal ribosomal protein uL22 family. As to quaternary structure, part of the 50S ribosomal subunit.

In terms of biological role, this protein binds specifically to 23S rRNA; its binding is stimulated by other ribosomal proteins, e.g. L4, L17, and L20. It is important during the early stages of 50S assembly. It makes multiple contacts with different domains of the 23S rRNA in the assembled 50S subunit and ribosome. Its function is as follows. The globular domain of the protein is located near the polypeptide exit tunnel on the outside of the subunit, while an extended beta-hairpin is found that lines the wall of the exit tunnel in the center of the 70S ribosome. The sequence is that of Large ribosomal subunit protein uL22 from Campylobacter curvus (strain 525.92).